Reading from the N-terminus, the 402-residue chain is Multidrug resistance protein MdtH (402 aa).

At 1 to 12 (MSRVSQARNLGK) the chain is on the cytoplasmic side. Residues 13 to 33 (YFLLIDNMLVVLGFFVVFPLI) traverse the membrane as a helical segment. Topologically, residues 34–98 (SIRFVDQMGW…GFATMGIAHE (65 aa)) are periplasmic. Residues 99 to 116 (PWLLWFSCLLSGLGGTLF) traverse the membrane as a helical segment. Topologically, residues 117–138 (DPPRSALVVKLIRPQQRGRFFS) are cytoplasmic. A helical membrane pass occupies residues 139–159 (LLMMQDSAGAVIGALLGSWLL). The Periplasmic segment spans residues 160 to 164 (QYDFR). The helical transmembrane segment at 165–185 (LVCATGAVLFVLCAAFNAWLL) threads the bilayer. Residues 186-213 (PAWKLSTVRTPVREGMTRVMRDKRFVTY) lie on the Cytoplasmic side of the membrane. Residues 214–234 (VLTLAGYYMLAVQVMLMLPIM) form a helical membrane-spanning segment. The Periplasmic portion of the chain corresponds to 235–243 (VNDVAGAPS). The chain crosses the membrane as a helical span at residues 244-264 (AVKWMYAIEACLSLTLLYPIA). Residues 265 to 276 (RWSEKHFRLEHR) lie on the Cytoplasmic side of the membrane. Residues 277–297 (LMAGLLIMSLSMMPVGMVSGL) form a helical membrane-spanning segment. Topologically, residues 298 to 299 (QQ) are periplasmic. Residues 300–320 (LFTLICLFYIGSIIAEPARET) traverse the membrane as a helical segment. Residues 321–339 (LSASLADARARGSYMGCSR) are Cytoplasmic-facing. The helical transmembrane segment at 340 to 360 (LGLAIGGAIGYIGGGWLFDLG) threads the bilayer. Topologically, residues 361 to 367 (KSAHQPE) are periplasmic. A helical membrane pass occupies residues 368 to 388 (LPWMMLGIIGIFTFLALGWQF). Over 389–402 (SQKRAARRLLERDA) the chain is Cytoplasmic.

The protein belongs to the major facilitator superfamily. DHA1 family. MdtH (TC 2.A.1.2.21) subfamily.

It localises to the cell inner membrane. Confers resistance to norfloxacin and enoxacin. This is Multidrug resistance protein MdtH from Escherichia coli (strain SE11).